The following is a 345-amino-acid chain: Phosphoribosylformylglycinamidine cyclo-ligase (345 aa).

This sequence belongs to the AIR synthase family.

It is found in the cytoplasm. It catalyses the reaction 2-formamido-N(1)-(5-O-phospho-beta-D-ribosyl)acetamidine + ATP = 5-amino-1-(5-phospho-beta-D-ribosyl)imidazole + ADP + phosphate + H(+). The protein operates within purine metabolism; IMP biosynthesis via de novo pathway; 5-amino-1-(5-phospho-D-ribosyl)imidazole from N(2)-formyl-N(1)-(5-phospho-D-ribosyl)glycinamide: step 2/2. The protein is Phosphoribosylformylglycinamidine cyclo-ligase of Shewanella sediminis (strain HAW-EB3).